The sequence spans 605 residues: Insulin-like growth factor-binding protein complex acid labile subunit (605 aa).

A signal peptide spans methionine 1–glycine 27. Residues threonine 32–glycine 74 form the LRRNT domain. 2 disulfide bridges follow: cysteine 41–cysteine 47 and cysteine 45–cysteine 60. Residues asparagine 64, asparagine 85, and asparagine 96 are each glycosylated (N-linked (GlcNAc...) asparagine). LRR repeat units lie at residues glycine 75–asparagine 96, serine 99–glycine 120, asparagine 123–tyrosine 144, alanine 147–glycine 168, asparagine 171–glycine 192, glycine 195–glycine 216, glutamate 219–glutamine 240, arginine 243–glycine 264, alanine 267–glycine 288, glycine 291–aspartate 312, phenylalanine 315–glycine 336, glutamine 339–glycine 360, asparagine 363–glycine 384, lysine 387–glycine 408, glycine 411–glycine 432, glutamate 435–glycine 456, lysine 459–proline 480, arginine 483–serine 504, and arginine 507–leucine 528. An N-linked (GlcNAc...) asparagine glycan is attached at asparagine 368. An N-linked (GlcNAc...) asparagine glycan is attached at asparagine 515. The region spanning asparagine 536–cysteine 605 is the LRRCT domain. Intrachain disulfides connect cysteine 540–cysteine 583, cysteine 542–cysteine 605, and cysteine 566–cysteine 571. A glycan (N-linked (GlcNAc...) asparagine) is linked at asparagine 580.

In terms of assembly, forms a ternary complex with IGF1 and IGFBP3.

Its subcellular location is the secreted. It is found in the extracellular space. Its function is as follows. Involved in protein-protein interactions that result in protein complexes, receptor-ligand binding or cell adhesion. This is Insulin-like growth factor-binding protein complex acid labile subunit (IGFALS) from Papio hamadryas (Hamadryas baboon).